The chain runs to 394 residues: Chalcone synthase 2 (394 aa).

C167 is a catalytic residue.

Belongs to the thiolase-like superfamily. Chalcone/stilbene synthases family.

The catalysed reaction is (E)-4-coumaroyl-CoA + 3 malonyl-CoA + 3 H(+) = 2',4,4',6'-tetrahydroxychalcone + 3 CO2 + 4 CoA. Its pathway is secondary metabolite biosynthesis; flavonoid biosynthesis. Functionally, the primary product of this enzyme is 4,2',4',6'-tetrahydroxychalcone (also termed naringenin-chalcone or chalcone) which can under specific conditions spontaneously isomerize into naringenin. In Secale cereale (Rye), this protein is Chalcone synthase 2 (CHS2).